A 639-amino-acid polypeptide reads, in one-letter code: Eukaryotic translation initiation factor 2-alpha kinase 2 (639 aa).

A Protein kinase domain is found at 171–588 (FEEYSLLGRG…LEVLNCGLLL (418 aa)). ATP is bound by residues 177 to 185 (LGRGGFGSV) and Lys200. Residues 298–320 (ISTSRKSSYSSTTESSNFENLES) show a composition bias toward low complexity. The interval 298-322 (ISTSRKSSYSSTTESSNFENLESPR) is disordered. The Proton acceptor role is filled by Asp417.

Belongs to the protein kinase superfamily. Ser/Thr protein kinase family. GCN2 subfamily. Autophosphorylated.

It carries out the reaction L-seryl-[protein] + ATP = O-phospho-L-seryl-[protein] + ADP + H(+). It catalyses the reaction L-threonyl-[protein] + ATP = O-phospho-L-threonyl-[protein] + ADP + H(+). Its function is as follows. Mediates down-regulation of protein synthesis in response to stress conditions by the phosphorylation of the alpha subunit of eIF-2 (tif211) on 'Ser-52'. Protein synthesis is inhibited at the level of initiation. Activity is inhibited in the presence of heme. The chain is Eukaryotic translation initiation factor 2-alpha kinase 2 (hri2) from Schizosaccharomyces pombe (strain 972 / ATCC 24843) (Fission yeast).